The primary structure comprises 339 residues: Glucokinase (339 aa).

Residue 16–21 (GDIGGT) participates in ATP binding.

This sequence belongs to the bacterial glucokinase family.

The protein resides in the cytoplasm. It carries out the reaction D-glucose + ATP = D-glucose 6-phosphate + ADP + H(+). In Sinorhizobium medicae (strain WSM419) (Ensifer medicae), this protein is Glucokinase.